Consider the following 350-residue polypeptide: Putative F-box protein At1g23770 (350 aa).

The span at 1-15 (MDTGFADSNNDSSPG) shows a compositional bias: polar residues. Residues 1 to 29 (MDTGFADSNNDSSPGEGSKRGNSGIEGPV) are disordered. The region spanning 206–252 (PPCLMLLPTELKLKILELLPGVSIGYMACVCTEMRYLASDNDLWEHK) is the F-box domain.

This is Putative F-box protein At1g23770 from Arabidopsis thaliana (Mouse-ear cress).